The chain runs to 483 residues: MTETKTLKNFIGGQWVASTSGKEEIVPNPATGEVLAKVPISSREELDAAVAAAKEAFREWRKVPVPRRARILFRYQQLLVEHWEELARLVTLENGKVYEDAYGEVQRGIECVEFAAGIPTLMMGQQLPDIATGIESGMYRYPLGVVAGITPFNFPMMVPCWMFPLAIACGNTFVLKPSERTPLLANRLAELFTEAGLPAGVLNIVHGAHEVVNGILEHKDIKAVSFVGSQPVAEYVYKTAAAYGKRVQALAGAKNHSIVMPDADLDMAVTNIINAAFGSAGERCMACSVVVAVGDIADELVERLKKAADRIQIGNGLDQGVFLGPVIRESHKERTIKYIEIGEREGALLVRDGRRDAATSGKGYFVGPTIFDHVKPGMTIWTDEIFAPVLSVVRARDLDEAIEIANRSEFANGACIYTDSAKAIRQFREEIDAGMLGVNVAVPAPMAFFPFSGYKNSFYGDLHANGRDGVEFYTRKKMVTARH.

Phe-152, Lys-176, Glu-179, Arg-180, and Ser-229 together coordinate NAD(+). The Nucleophile role is filled by Cys-284. NAD(+) is bound at residue Glu-384.

The protein belongs to the aldehyde dehydrogenase family. IolA subfamily. Homotetramer.

The enzyme catalyses 3-oxopropanoate + NAD(+) + CoA + H2O = hydrogencarbonate + acetyl-CoA + NADH + H(+). It carries out the reaction 2-methyl-3-oxopropanoate + NAD(+) + CoA + H2O = propanoyl-CoA + hydrogencarbonate + NADH + H(+). Its pathway is polyol metabolism; myo-inositol degradation into acetyl-CoA; acetyl-CoA from myo-inositol: step 7/7. Its function is as follows. Catalyzes the oxidation of malonate semialdehyde (MSA) and methylmalonate semialdehyde (MMSA) into acetyl-CoA and propanoyl-CoA, respectively. Is involved in a myo-inositol catabolic pathway. Bicarbonate, and not CO2, is the end-product of the enzymatic reaction. In Geobacillus thermodenitrificans (strain NG80-2), this protein is Malonate-semialdehyde dehydrogenase 2.